We begin with the raw amino-acid sequence, 262 residues long: Eukaryotic translation initiation factor 3 subunit G (262 aa).

The RRM domain maps to 182–260; the sequence is NTCRVTNLPQ…MVLKVEWTRP (79 aa).

The protein belongs to the eIF-3 subunit G family. As to quaternary structure, component of the eukaryotic translation initiation factor 3 (eIF-3) complex.

It is found in the cytoplasm. RNA-binding component of the eukaryotic translation initiation factor 3 (eIF-3) complex, which is involved in protein synthesis of a specialized repertoire of mRNAs and, together with other initiation factors, stimulates binding of mRNA and methionyl-tRNAi to the 40S ribosome. The eIF-3 complex specifically targets and initiates translation of a subset of mRNAs involved in cell proliferation. This subunit can bind 18S rRNA. Binds to GC-rich 5'UTRs in cholinergic motor neurons, thereby may play a role in translational regulation of mRNAs involved in neuropeptide signaling and stress response, including hlh-30 isoform d and ncs-2. The polypeptide is Eukaryotic translation initiation factor 3 subunit G (Caenorhabditis elegans).